The following is an 867-amino-acid chain: KH domain-containing protein akap-1 (867 aa).

The chain crosses the membrane as a helical span at residues 108-128 (HALLIALGGFSIAALFVWYIN). 2 disordered regions span residues 145–458 (SNGL…QKRV) and 481–523 (HENA…GLTT). A compositionally biased stretch (polar residues) spans 152–162 (ATASDVQTENG). 4 stretches are compositionally biased toward basic and acidic residues: residues 186–211 (QQKDEDEKTQKKDAVQNEKPSIDKKQ), 218–239 (TEKKEEKTVEIHTETEETDHVA), 247–275 (SEHKEHDKKTKQKNDEPVSIDKKSEEIEV), and 298–307 (QFVKKEEPKL). The segment covering 336–345 (TKMNDATSPL) has biased composition (polar residues). Basic and acidic residues predominate over residues 363 to 383 (EMEKSFNEEEFRLNESSDIDR). The segment covering 397–408 (NKNRSSQKRKGG) has biased composition (basic residues). Basic and acidic residues-rich tracts occupy residues 441–458 (LTKEKSVEETPEKSQKRV) and 481–490 (HENASYEKSD). Polar residues predominate over residues 494–507 (LDSQNSEASSQDSG). In terms of domain architecture, KH spans 528–595 (LPMYEFEIPN…DEINHCLQML (68 aa)). One can recognise a Tudor domain in the interval 689–747 (PCQNGLLCAAPVGNAWFRAVTVQYFDETDEVFVKFVDYGGYSKMARQDLRQIRTDLMSL).

The protein localises to the membrane. In Caenorhabditis elegans, this protein is KH domain-containing protein akap-1.